The following is an 813-amino-acid chain: Probable receptor-like protein kinase At5g39020 (813 aa).

A signal peptide spans 1 to 21; it reads MNCNVLFLLSVLVSVTAGVTA. Residues 22 to 437 lie on the Extracellular side of the membrane; the sequence is AYHPTDVFLF…TPPIKGKPHV (416 aa). 10 N-linked (GlcNAc...) asparagine glycosylation sites follow: asparagine 46, asparagine 61, asparagine 165, asparagine 202, asparagine 213, asparagine 263, asparagine 286, asparagine 293, asparagine 384, and asparagine 401. The chain crosses the membrane as a helical span at residues 438–458; sequence LVIILIVVGSVIGLATFIVII. Residues 459–813 are Cytoplasmic-facing; that stretch reads MLLIRQMKRK…QTQTLDSTII (355 aa). One can recognise a Protein kinase domain in the interval 496-771; that stretch reads KSFSHTVGKG…KVVEMIEGSL (276 aa). ATP is bound by residues 502 to 510 and lysine 524; that span reads VGKGGFGTV. Residue aspartate 619 is the Proton acceptor of the active site. The interval 791–813 is disordered; it reads ESSSLSDGQEAEKQTQTLDSTII. The span at 804–813 shows a compositional bias: polar residues; that stretch reads QTQTLDSTII.

Belongs to the protein kinase superfamily. Ser/Thr protein kinase family.

It is found in the membrane. In Arabidopsis thaliana (Mouse-ear cress), this protein is Probable receptor-like protein kinase At5g39020.